The primary structure comprises 173 residues: Photosystem I assembly protein Ycf3 (173 aa).

3 TPR repeats span residues 35 to 68 (AYVYYRDGLSAQNAGDYAEALENYEESLKLEESP), 72 to 105 (SETLKNMAIIYMSNGDEDLALDTYQRALDQNSNQ), and 120 to 153 (GRTAQEAGLQDEADQLFDRAADVWTQAVRLYPGG).

The protein belongs to the Ycf3 family.

The protein resides in the cellular thylakoid membrane. In terms of biological role, essential for the assembly of the photosystem I (PSI) complex. May act as a chaperone-like factor to guide the assembly of the PSI subunits. The protein is Photosystem I assembly protein Ycf3 of Prochlorococcus marinus (strain MIT 9303).